Reading from the N-terminus, the 103-residue chain is L-rhamnose mutarotase (103 aa).

Y18 provides a ligand contact to substrate. Residue H22 is the Proton donor of the active site. Substrate contacts are provided by residues Y41 and 76–77 (WW).

The protein belongs to the rhamnose mutarotase family. In terms of assembly, homodimer.

The protein resides in the cytoplasm. The enzyme catalyses alpha-L-rhamnose = beta-L-rhamnose. The protein operates within carbohydrate metabolism; L-rhamnose metabolism. Involved in the anomeric conversion of L-rhamnose. This Enterococcus faecalis (strain ATCC 700802 / V583) protein is L-rhamnose mutarotase.